The sequence spans 253 residues: HTH-type transcriptional regulator YdeO (253 aa).

The region spanning 137–233 is the HTH araC/xylS-type domain; it reads GKVRNIVNMK…GNSPKRVSKE (97 aa). 2 DNA-binding regions (H-T-H motif) span residues 154–175 and 200–223; these read KDIC…KQEQ and VNKI…RKHF.

Its function is as follows. Induces the expression of gadE and mdtEF. Could also regulate the expression of other genes involved in acid resistance. The chain is HTH-type transcriptional regulator YdeO from Escherichia coli O157:H7.